Consider the following 277-residue polypeptide: Sulfur carrier protein FdhD (277 aa).

The active-site Cysteine persulfide intermediate is cysteine 121. Residue 260–265 participates in Mo-bis(molybdopterin guanine dinucleotide) binding; sequence FCKPGR.

It belongs to the FdhD family.

It is found in the cytoplasm. In terms of biological role, required for formate dehydrogenase (FDH) activity. Acts as a sulfur carrier protein that transfers sulfur from IscS to the molybdenum cofactor prior to its insertion into FDH. This is Sulfur carrier protein FdhD from Escherichia coli O6:H1 (strain CFT073 / ATCC 700928 / UPEC).